The sequence spans 350 residues: Beta-hexosaminidase (350 aa).

Substrate-binding positions include D73, R81, R148, and 178-179 (KH). The Proton donor/acceptor role is filled by H191. D262 (nucleophile) is an active-site residue.

The protein belongs to the glycosyl hydrolase 3 family. NagZ subfamily.

The protein localises to the cytoplasm. It catalyses the reaction Hydrolysis of terminal non-reducing N-acetyl-D-hexosamine residues in N-acetyl-beta-D-hexosaminides.. It functions in the pathway cell wall biogenesis; peptidoglycan recycling. Plays a role in peptidoglycan recycling by cleaving the terminal beta-1,4-linked N-acetylglucosamine (GlcNAc) from peptide-linked peptidoglycan fragments, giving rise to free GlcNAc, anhydro-N-acetylmuramic acid and anhydro-N-acetylmuramic acid-linked peptides. This Bordetella avium (strain 197N) protein is Beta-hexosaminidase.